The chain runs to 204 residues: MSKESQLEALVAACHWIGAKGWAPATGGNMSLREDARWCWLSESGKDKGSLTTDDFLQVDIATNLAPSGRKPSAETGLHTLIYRLFPEANCVLHVHTVNATVLSRVEKSDALHLSGYEMQKSLAGQITHLDDVPVAIFDNDQDIDALAERIARHHRQFPLRYGFLLRGHGLTCWGSDVAVARRHLEGLEFLFECEMQRRLLERA.

2 residues coordinate Zn(2+): histidine 94 and histidine 96.

It belongs to the aldolase class II family. MtnB subfamily. Zn(2+) is required as a cofactor.

The catalysed reaction is 5-(methylsulfanyl)-D-ribulose 1-phosphate = 5-methylsulfanyl-2,3-dioxopentyl phosphate + H2O. The protein operates within amino-acid biosynthesis; L-methionine biosynthesis via salvage pathway; L-methionine from S-methyl-5-thio-alpha-D-ribose 1-phosphate: step 2/6. Catalyzes the dehydration of methylthioribulose-1-phosphate (MTRu-1-P) into 2,3-diketo-5-methylthiopentyl-1-phosphate (DK-MTP-1-P). The polypeptide is Methylthioribulose-1-phosphate dehydratase (Cronobacter sakazakii (strain ATCC BAA-894) (Enterobacter sakazakii)).